A 441-amino-acid polypeptide reads, in one-letter code: Proline--tRNA ligase (441 aa).

It belongs to the class-II aminoacyl-tRNA synthetase family. ProS type 2 subfamily. As to quaternary structure, homodimer.

Its subcellular location is the cytoplasm. The enzyme catalyses tRNA(Pro) + L-proline + ATP = L-prolyl-tRNA(Pro) + AMP + diphosphate. Functionally, catalyzes the attachment of proline to tRNA(Pro) in a two-step reaction: proline is first activated by ATP to form Pro-AMP and then transferred to the acceptor end of tRNA(Pro). The polypeptide is Proline--tRNA ligase (Bartonella henselae (strain ATCC 49882 / DSM 28221 / CCUG 30454 / Houston 1) (Rochalimaea henselae)).